The primary structure comprises 308 residues: Paired box protein 3 homolog (308 aa).

A DNA-binding region (paired) is located at residues 13–140 (GQGRVNQLGG…PAIKRLIGNK (128 aa)). The tract at residues 16–72 (RVNQLGGVFINGRPLPIHVRHAIISMAKKGIKPCHISRQLKVSHGAVSKILNRYAET) is PAI subdomain. The RED subdomain stretch occupies residues 92–140 (AVEKEILIACDENPQMSAAELRDWLIHKDICTKGNAPTVPAIKRLIGNK). Residues 168 to 191 (CSKSSSDDEEGSSPSNDASSRRNR) form a disordered region. The segment at residues 187 to 246 (SRRNRTSFTAEQLDVLENAFRADTYPHANARESISKETGLSEEKIMTWFSNRRARCRKNM) is a DNA-binding region (homeobox).

Belongs to the paired homeobox family.

The protein resides in the nucleus. Its function is as follows. Transcriptional activator. Regulates the lateral/ventral epidermal cell fate decision. The protein is Paired box protein 3 homolog of Caenorhabditis elegans.